A 206-amino-acid polypeptide reads, in one-letter code: Small ribosomal subunit protein uS4 (206 aa).

An S4 RNA-binding domain is found at 98 to 158; that stretch reads RRLDNVVFRL…EKSRSMELIK (61 aa).

The protein belongs to the universal ribosomal protein uS4 family. In terms of assembly, part of the 30S ribosomal subunit. Contacts protein S5. The interaction surface between S4 and S5 is involved in control of translational fidelity.

One of the primary rRNA binding proteins, it binds directly to 16S rRNA where it nucleates assembly of the body of the 30S subunit. Functionally, with S5 and S12 plays an important role in translational accuracy. This chain is Small ribosomal subunit protein uS4, found in Thermoanaerobacter pseudethanolicus (strain ATCC 33223 / 39E) (Clostridium thermohydrosulfuricum).